A 102-amino-acid chain; its full sequence is Citrate lyase acyl carrier protein (102 aa).

S14 is subject to O-(phosphoribosyl dephospho-coenzyme A)serine.

Belongs to the CitD family. Oligomer with a subunit composition of (alpha,beta,gamma)6.

The protein resides in the cytoplasm. In terms of biological role, covalent carrier of the coenzyme of citrate lyase. In Streptococcus pyogenes serotype M4 (strain MGAS10750), this protein is Citrate lyase acyl carrier protein.